We begin with the raw amino-acid sequence, 188 residues long: Threonylcarbamoyl-AMP synthase (188 aa).

The YrdC-like domain maps to 3–188 (QLHPSEIKDI…RSGKILRNGQ (186 aa)).

It belongs to the SUA5 family. TsaC subfamily.

The protein localises to the cytoplasm. It carries out the reaction L-threonine + hydrogencarbonate + ATP = L-threonylcarbamoyladenylate + diphosphate + H2O. Its function is as follows. Required for the formation of a threonylcarbamoyl group on adenosine at position 37 (t(6)A37) in tRNAs that read codons beginning with adenine. Catalyzes the conversion of L-threonine, HCO(3)(-)/CO(2) and ATP to give threonylcarbamoyl-AMP (TC-AMP) as the acyladenylate intermediate, with the release of diphosphate. The sequence is that of Threonylcarbamoyl-AMP synthase from Shewanella sp. (strain MR-4).